The primary structure comprises 586 residues: Tetratricopeptide repeat protein 39B (586 aa).

3 TPR repeats span residues 292 to 325 (SIILFYAARIDILKGRFEQAQETFQKCIVSQQEW), 483 to 516 (CLVQLLKGVCLKHLGRLLQAELCFNQVIQSEKRV), and 524 to 557 (PFTFYELGLLYKEQGDRDKAIRYIETAKGNYKDY).

This sequence belongs to the TTC39 family.

In terms of biological role, may be involved in lipid metabolism. This Xenopus laevis (African clawed frog) protein is Tetratricopeptide repeat protein 39B (ttc39b).